The following is a 373-amino-acid chain: 4-hydroxy-3-methylbut-2-en-1-yl diphosphate synthase (flavodoxin) (373 aa).

[4Fe-4S] cluster contacts are provided by C270, C273, C305, and E312.

Belongs to the IspG family. The cofactor is [4Fe-4S] cluster.

It catalyses the reaction (2E)-4-hydroxy-3-methylbut-2-enyl diphosphate + oxidized [flavodoxin] + H2O + 2 H(+) = 2-C-methyl-D-erythritol 2,4-cyclic diphosphate + reduced [flavodoxin]. It participates in isoprenoid biosynthesis; isopentenyl diphosphate biosynthesis via DXP pathway; isopentenyl diphosphate from 1-deoxy-D-xylulose 5-phosphate: step 5/6. In terms of biological role, converts 2C-methyl-D-erythritol 2,4-cyclodiphosphate (ME-2,4cPP) into 1-hydroxy-2-methyl-2-(E)-butenyl 4-diphosphate. The chain is 4-hydroxy-3-methylbut-2-en-1-yl diphosphate synthase (flavodoxin) from Erwinia tasmaniensis (strain DSM 17950 / CFBP 7177 / CIP 109463 / NCPPB 4357 / Et1/99).